A 908-amino-acid polypeptide reads, in one-letter code: 26S proteasome non-ATPase regulatory subunit 2 (908 aa).

Met1 bears the N-acetylmethionine mark. The segment at 1–52 (MEEGGRDKAPLQPQQPPATSPGSGDEKPSGKERRDAGDKDKEQELSEEDKQL) is disordered. Over residues 24-52 (GDEKPSGKERRDAGDKDKEQELSEEDKQL) the composition is skewed to basic and acidic residues. Phosphoserine occurs at positions 29 and 147. Tyr194 carries the post-translational modification Phosphotyrosine. Phosphoserine is present on residues Ser361 and Ser363. PC repeat units lie at residues 409–442 (SAAA…YIKS), 443–479 (GALL…TMRL), 480–514 (GSIF…SMEV), 517–551 (VTAL…TELK), and 560–589 (LGLG…PFRS). Lys551 is modified (N6-acetyllysine). Residues 623–643 (KEKEEDKDKKEKKDKDKKEAP) are compositionally biased toward basic and acidic residues. The segment at 623–645 (KEKEEDKDKKEKKDKDKKEAPAD) is disordered. PC repeat units lie at residues 692–723 (LALA…EVSY) and 742–757 (AAML…KDPN). The interval 708 to 903 (DTLSKFSHDA…LEGFVILRKN (196 aa)) is required for interaction with UBLCP1.

It belongs to the proteasome subunit S2 family. Component of the 19S proteasome regulatory particle complex. The 26S proteasome consists of a 20S core particle (CP) and two 19S regulatory subunits (RP). The regulatory particle is made of a lid composed of 9 subunits, a base containing 6 ATPases and few additional components including PSMD2. Interacts with RPGRIP1L. Interacts with CRY1 in a KDM8-dependent manner. Interacts (via C-terminus) with phosphatase UBLCP1 (via ubiquitin-like domain); the interaction recruits UBLCP1 to the 19S regulatory particle where it dephosphorylates 19S subunit PSMC2/RPT1 which impairs PSMC2 ATPase activity and disrupts 26S proteasome assembly.

Functionally, component of the 26S proteasome, a multiprotein complex involved in the ATP-dependent degradation of ubiquitinated proteins. This complex plays a key role in the maintenance of protein homeostasis by removing misfolded or damaged proteins, which could impair cellular functions, and by removing proteins whose functions are no longer required. Therefore, the proteasome participates in numerous cellular processes, including cell cycle progression, apoptosis, or DNA damage repair. In terms of biological role, binds to the intracellular domain of tumor necrosis factor type 1 receptor. The binding domain of TRAP1 and TRAP2 resides outside the death domain of TNFR1. The protein is 26S proteasome non-ATPase regulatory subunit 2 (PSMD2) of Bos taurus (Bovine).